A 549-amino-acid chain; its full sequence is Glucose-6-phosphate isomerase (549 aa).

Glu-353 (proton donor) is an active-site residue. Catalysis depends on residues His-384 and Lys-510.

It belongs to the GPI family.

The protein localises to the cytoplasm. It carries out the reaction alpha-D-glucose 6-phosphate = beta-D-fructose 6-phosphate. It participates in carbohydrate biosynthesis; gluconeogenesis. The protein operates within carbohydrate degradation; glycolysis; D-glyceraldehyde 3-phosphate and glycerone phosphate from D-glucose: step 2/4. Functionally, catalyzes the reversible isomerization of glucose-6-phosphate to fructose-6-phosphate. This is Glucose-6-phosphate isomerase from Mycolicibacterium smegmatis (strain ATCC 700084 / mc(2)155) (Mycobacterium smegmatis).